A 367-amino-acid chain; its full sequence is Tetraacyldisaccharide 4'-kinase (367 aa).

An ATP-binding site is contributed by Val68–Thr75.

The protein belongs to the LpxK family.

The catalysed reaction is a lipid A disaccharide + ATP = a lipid IVA + ADP + H(+). It participates in glycolipid biosynthesis; lipid IV(A) biosynthesis; lipid IV(A) from (3R)-3-hydroxytetradecanoyl-[acyl-carrier-protein] and UDP-N-acetyl-alpha-D-glucosamine: step 6/6. Its function is as follows. Transfers the gamma-phosphate of ATP to the 4'-position of a tetraacyldisaccharide 1-phosphate intermediate (termed DS-1-P) to form tetraacyldisaccharide 1,4'-bis-phosphate (lipid IVA). The polypeptide is Tetraacyldisaccharide 4'-kinase (Chlamydia caviae (strain ATCC VR-813 / DSM 19441 / 03DC25 / GPIC) (Chlamydophila caviae)).